A 542-amino-acid chain; its full sequence is GMP synthase [glutamine-hydrolyzing] (542 aa).

One can recognise a Glutamine amidotransferase type-1 domain in the interval 28–218 (MIVILDFGSQ…VYHICECEPT (191 aa)). Cysteine 105 acts as the Nucleophile in catalysis. Active-site residues include histidine 192 and glutamate 194. A GMPS ATP-PPase domain is found at 219–417 (WTTEAFVEEA…IGLPEEIVRR (199 aa)). 246 to 252 (SGGVDSS) contributes to the ATP binding site.

As to quaternary structure, homodimer.

The enzyme catalyses XMP + L-glutamine + ATP + H2O = GMP + L-glutamate + AMP + diphosphate + 2 H(+). The protein operates within purine metabolism; GMP biosynthesis; GMP from XMP (L-Gln route): step 1/1. Catalyzes the synthesis of GMP from XMP. This is GMP synthase [glutamine-hydrolyzing] from Gloeothece citriformis (strain PCC 7424) (Cyanothece sp. (strain PCC 7424)).